Here is a 119-residue protein sequence, read N- to C-terminus: Large ribosomal subunit protein uL18 (119 aa).

The tract at residues 1 to 25 (MITKIDKNKVRKKRHARVRSKISGT) is disordered. Over residues 9-20 (KVRKKRHARVRS) the composition is skewed to basic residues.

It belongs to the universal ribosomal protein uL18 family. In terms of assembly, part of the 50S ribosomal subunit; part of the 5S rRNA/L5/L18/L25 subcomplex. Contacts the 5S and 23S rRNAs.

Functionally, this is one of the proteins that bind and probably mediate the attachment of the 5S RNA into the large ribosomal subunit, where it forms part of the central protuberance. The polypeptide is Large ribosomal subunit protein uL18 (Listeria monocytogenes serotype 4b (strain CLIP80459)).